We begin with the raw amino-acid sequence, 185 residues long: Ribosome-recycling factor (185 aa).

The protein belongs to the RRF family.

The protein resides in the cytoplasm. Its function is as follows. Responsible for the release of ribosomes from messenger RNA at the termination of protein biosynthesis. May increase the efficiency of translation by recycling ribosomes from one round of translation to another. The chain is Ribosome-recycling factor from Wigglesworthia glossinidia brevipalpis.